The chain runs to 969 residues: Exoribonuclease II, mitochondrial (969 aa).

Residues M1–K41 constitute a mitochondrion transit peptide. The span at R28 to Q38 shows a compositional bias: basic residues. The tract at residues R28 to Q54 is disordered. Positions A40–D51 are enriched in basic and acidic residues. Positions R522–Q853 constitute an RNB domain.

Belongs to the RNR ribonuclease family. MSU1 and SUV3 are the two components of the mitochondrial degradosome (mtEXO).

It localises to the mitochondrion matrix. It carries out the reaction Exonucleolytic cleavage in the 3'- to 5'-direction to yield nucleoside 5'-phosphates.. In terms of biological role, essential for mitochondrial biogenesis. Functionally, required for intron-independent turnover and processing of mitochondrial RNA. Participates in 3' mtRNA processing where it hydrolyzes single-stranded RNA or partially double-stranded RNA with 3' single-stranded tails. The polypeptide is Exoribonuclease II, mitochondrial (DSS1) (Saccharomyces cerevisiae (strain ATCC 204508 / S288c) (Baker's yeast)).